Consider the following 418-residue polypeptide: MTLFKHWQTLYINVNLATMTDGSESYGEISQGALAISAGKIAWLGKESDLPEHFSVTDEDIEVIDCKGQWLTPGLIDCHTHLVYGGNRANEFEMRLQGKSYQEIANAGGGIVSTVTATRRASEQELLASALPRLTALHQQGVTTVEIKSGYGLDTINEIKMLKVAGLLADELPVTIKRTFLGAHALPIEYKDNAEGYLDVVCEEMLPQVVSENLADAVDVFCEGIGFSLAQTKRVFDAAQSHDLPIKVHAEQLSNLGASELAANYNALSSDHIEFLDEAGIKAMKKSGMTAVLLPGAFYFLRETQLPPIELLRKHQVPMAVATDANPGTSPIHNIHLMLNMACTLFRLTPSEALAGITCYGAKALGLSESKGQLAVGYDADIALWNINQPAELCYQFGVNPLSRLIQNGQQVLMNESA.

2 residues coordinate Fe(3+): His-79 and His-81. Zn(2+) is bound by residues His-79 and His-81. 4-imidazolone-5-propanoate-binding residues include Arg-88, Tyr-151, and His-184. An N-formimidoyl-L-glutamate-binding site is contributed by Tyr-151. Fe(3+) is bound at residue His-249. Residue His-249 coordinates Zn(2+). Position 252 (Gln-252) interacts with 4-imidazolone-5-propanoate. Asp-324 contributes to the Fe(3+) binding site. A Zn(2+)-binding site is contributed by Asp-324. Asn-326 and Gly-328 together coordinate N-formimidoyl-L-glutamate. Thr-329 lines the 4-imidazolone-5-propanoate pocket.

It belongs to the metallo-dependent hydrolases superfamily. HutI family. Requires Zn(2+) as cofactor. It depends on Fe(3+) as a cofactor.

Its subcellular location is the cytoplasm. The catalysed reaction is 4-imidazolone-5-propanoate + H2O = N-formimidoyl-L-glutamate. The protein operates within amino-acid degradation; L-histidine degradation into L-glutamate; N-formimidoyl-L-glutamate from L-histidine: step 3/3. Catalyzes the hydrolytic cleavage of the carbon-nitrogen bond in imidazolone-5-propanoate to yield N-formimidoyl-L-glutamate. It is the third step in the universal histidine degradation pathway. The polypeptide is Imidazolonepropionase (Colwellia psychrerythraea (strain 34H / ATCC BAA-681) (Vibrio psychroerythus)).